Consider the following 248-residue polypeptide: Geranylgeranylglyceryl phosphate synthase (248 aa).

Residues aspartate 25 and serine 50 each coordinate Mg(2+). Sn-glycerol 1-phosphate contacts are provided by residues 170-176 (YLEAGSG), 201-202 (GG), and 223-224 (GT).

The protein belongs to the GGGP/HepGP synthase family. Group II subfamily. The cofactor is Mg(2+).

The protein localises to the cytoplasm. It catalyses the reaction sn-glycerol 1-phosphate + (2E,6E,10E)-geranylgeranyl diphosphate = sn-3-O-(geranylgeranyl)glycerol 1-phosphate + diphosphate. Its pathway is membrane lipid metabolism; glycerophospholipid metabolism. Prenyltransferase that catalyzes the transfer of the geranylgeranyl moiety of geranylgeranyl diphosphate (GGPP) to the C3 hydroxyl of sn-glycerol-1-phosphate (G1P). This reaction is the first ether-bond-formation step in the biosynthesis of archaeal membrane lipids. The sequence is that of Geranylgeranylglyceryl phosphate synthase from Methanococcus aeolicus (strain ATCC BAA-1280 / DSM 17508 / OCM 812 / Nankai-3).